The primary structure comprises 159 residues: Probable carbonic anhydrase (159 aa).

Residues 33 to 35 (RGD) and 48 to 49 (QD) each bind substrate. Positions 54, 71, and 76 each coordinate Zn(2+).

The protein belongs to the gamma-class carbonic anhydrase family. Zn(2+) serves as cofactor.

It catalyses the reaction hydrogencarbonate + H(+) = CO2 + H2O. In terms of biological role, probably reversibly hydrates carbon dioxide. The protein is Probable carbonic anhydrase of Methanocaldococcus jannaschii (strain ATCC 43067 / DSM 2661 / JAL-1 / JCM 10045 / NBRC 100440) (Methanococcus jannaschii).